The sequence spans 250 residues: Triosephosphate isomerase (250 aa).

Residue 9–11 (NWK) participates in substrate binding. The active-site Electrophile is the histidine 95. The active-site Proton acceptor is glutamate 167. Substrate-binding positions include glycine 173, serine 213, and 234 to 235 (GG).

It belongs to the triosephosphate isomerase family. Homodimer.

The protein resides in the cytoplasm. The catalysed reaction is D-glyceraldehyde 3-phosphate = dihydroxyacetone phosphate. Its pathway is carbohydrate biosynthesis; gluconeogenesis. It participates in carbohydrate degradation; glycolysis; D-glyceraldehyde 3-phosphate from glycerone phosphate: step 1/1. Its function is as follows. Involved in the gluconeogenesis. Catalyzes stereospecifically the conversion of dihydroxyacetone phosphate (DHAP) to D-glyceraldehyde-3-phosphate (G3P). The protein is Triosephosphate isomerase of Exiguobacterium sibiricum (strain DSM 17290 / CCUG 55495 / CIP 109462 / JCM 13490 / 255-15).